Consider the following 130-residue polypeptide: Small ribosomal subunit protein uS8 (130 aa).

It belongs to the universal ribosomal protein uS8 family.

It localises to the cytoplasm. This is Small ribosomal subunit protein uS8 (RPS15A) from Brassica napus (Rape).